The sequence spans 205 residues: MIGRLRGVLVEKQAPEILMDVNGVGYELQMPLTSFYELPEIDHETVVYTHFVVREDAQLLYGFITKQERALFRLLIKTNGVGPKLALTILSGMTASEFVGCVERDDIVTLVKLPGVGKKTAERLLVEMRDKLKSLMEASAGSEREFVLQSNYSPTPTVNSAEEDAISALISLGYKPPQASKSVSAAYKEGMDSETLIKAALKSML.

The segment at 1–64 (MIGRLRGVLV…EDAQLLYGFI (64 aa)) is domain I. The tract at residues 65–143 (TKQERALFRL…SLMEASAGSE (79 aa)) is domain II. Residues 144–156 (REFVLQSNYSPTP) are flexible linker. Positions 157–205 (TVNSAEEDAISALISLGYKPPQASKSVSAAYKEGMDSETLIKAALKSML) are domain III.

It belongs to the RuvA family. As to quaternary structure, homotetramer. Forms an RuvA(8)-RuvB(12)-Holliday junction (HJ) complex. HJ DNA is sandwiched between 2 RuvA tetramers; dsDNA enters through RuvA and exits via RuvB. An RuvB hexamer assembles on each DNA strand where it exits the tetramer. Each RuvB hexamer is contacted by two RuvA subunits (via domain III) on 2 adjacent RuvB subunits; this complex drives branch migration. In the full resolvosome a probable DNA-RuvA(4)-RuvB(12)-RuvC(2) complex forms which resolves the HJ.

Its subcellular location is the cytoplasm. Its function is as follows. The RuvA-RuvB-RuvC complex processes Holliday junction (HJ) DNA during genetic recombination and DNA repair, while the RuvA-RuvB complex plays an important role in the rescue of blocked DNA replication forks via replication fork reversal (RFR). RuvA specifically binds to HJ cruciform DNA, conferring on it an open structure. The RuvB hexamer acts as an ATP-dependent pump, pulling dsDNA into and through the RuvAB complex. HJ branch migration allows RuvC to scan DNA until it finds its consensus sequence, where it cleaves and resolves the cruciform DNA. This is Holliday junction branch migration complex subunit RuvA from Shewanella sp. (strain W3-18-1).